Here is a 458-residue protein sequence, read N- to C-terminus: Major capsid protein (458 aa).

Residues 21–110 (LEGLTAAQKA…EIKSLLTARE (90 aa)) adopt a coiled-coil conformation.

The protein belongs to the HK97 phage major capsid protein family. As to quaternary structure, interacts with the decoration protein; each hexon binds a single copy of the decoration protein. Interacts with the portal protein. The scaffolding domain delta is cleaved by the prohead protease and lost after assembly. The major capsid protein precursors together with both the portal complex and the maturation protease form prohead I. All copies of the major capsid protein precursor are cleaved to the mature major capsid protein by release of the scaffolding domain delta, yielding the metastable prohead II.

The protein resides in the virion. In terms of biological role, major capsid protein that self-associates to form 120 hexamers and 11 pentamers, building the T=13 icosahedral capsid which about 860 Angstroms in diameter. Responsible for its self-assembly into a procapsid. The phage does not need to encode a separate scaffolfing protein because its capsid protein contains the delta domain that carries that function. The capsid gains its final stability through the reorganization of the subunits that takes place upon expansion. DNA encapsidation through the portal triggers capsid expansion and the binding of the decoration protein to the capsid exterior. Might play a role in counteracting the host Pycsar defense system that is mediated by pyrimidine cyclases and leads to abortive infection. This is Major capsid protein from Escherichia coli (Enterobacteria phage T5).